Consider the following 248-residue polypeptide: Trypsin II-P29 (248 aa).

The first 16 residues, 1 to 16, serve as a signal peptide directing secretion; that stretch reads MKFLFLILSCLGAAVA. A propeptide spans 17–25 (activation peptide); the sequence is FPGGADDDK. Residues 26–246 form the Peptidase S1 domain; that stretch reads IVGGYTCPEH…YVDWIQETIA (221 aa). 6 cysteine pairs are disulfide-bonded: Cys32–Cys162, Cys50–Cys66, Cys134–Cys235, Cys141–Cys208, Cys173–Cys187, and Cys198–Cys222. His65 functions as the Charge relay system in the catalytic mechanism. Ca(2+)-binding residues include Glu77, Asn79, Val82, and Glu87. Asp109 acts as the Charge relay system in catalysis. Ser202 functions as the Charge relay system in the catalytic mechanism.

Belongs to the peptidase S1 family. Requires Ca(2+) as cofactor. High levels are seen in the pancreas while lower levels are found in the liver, spleen and thymus.

The protein resides in the secreted. It is found in the extracellular space. The catalysed reaction is Preferential cleavage: Arg-|-Xaa, Lys-|-Xaa.. The polypeptide is Trypsin II-P29 (Gallus gallus (Chicken)).